A 274-amino-acid chain; its full sequence is MFRLPLQCVLWGCLLSSVHPEPPTACREKQYLINSQCCSLCQPGWKLVNDCTEVTETECLPCGKGEFLDTWNRETHCHQHKYCDPNLGLRVQQEGTSVTDNICVCKEGRHCTSKACESCVLYHSCSPGFGVKQIATGVSDTICEPCPVGFFSNVSSAFEKCRPWTRCETKGLAEQQAGTDKTDAVCGPQNRLRLLVVIPIMLGILFAILLVLVFIKKVDRKPQDKAPCTKQIPQEIDDLPGPNPTPPVQETLHGCQPVAQEDGKESRISVQERQ.

An N-terminal signal peptide occupies residues M1–P20. Residues E21–L194 lie on the Extracellular side of the membrane. TNFR-Cys repeat units lie at residues A25–L60, P61–C103, V104–E144, and P145–G187. Intrachain disulfides connect C26–C37, C38–C51, C41–C59, C62–C77, C83–C103, C105–C119, C111–C116, and C125–C143. N153 carries N-linked (GlcNAc...) asparagine glycosylation. Residues L195–I215 form a helical membrane-spanning segment. Residues K216–Q274 lie on the Cytoplasmic side of the membrane. Positions D224–Q274 are disordered. Residues E261–Q274 show a composition bias toward basic and acidic residues.

Monomer and homodimer. Interacts with TRAF1, TRAF2, TRAF3, TRAF5 and TRAF6. Interacts with TRAF6 and MAP3K8; the interaction is required for ERK activation.

The protein resides in the membrane. In terms of biological role, receptor for TNFSF5/CD40LG. Transduces TRAF6- and MAP3K8-mediated signals that activate ERK in macrophages and B cells, leading to induction of immunoglobulin secretion. In Callithrix jacchus (White-tufted-ear marmoset), this protein is Tumor necrosis factor receptor superfamily member 5 (CD40).